Consider the following 295-residue polypeptide: Nitrogenase iron protein (295 aa).

10 to 17 (GKGGIGKS) is a binding site for ATP. C98 lines the [4Fe-4S] cluster pocket. R101 bears the ADP-ribosylarginine; by dinitrogenase reductase ADP-ribosyltransferase mark. C133 is a binding site for [4Fe-4S] cluster.

It belongs to the NifH/BchL/ChlL family. As to quaternary structure, homodimer. The cofactor is [4Fe-4S] cluster. The reversible ADP-ribosylation of Arg-101 inactivates the nitrogenase reductase and regulates nitrogenase activity.

It carries out the reaction N2 + 8 reduced [2Fe-2S]-[ferredoxin] + 16 ATP + 16 H2O = H2 + 8 oxidized [2Fe-2S]-[ferredoxin] + 2 NH4(+) + 16 ADP + 16 phosphate + 6 H(+). In terms of biological role, the key enzymatic reactions in nitrogen fixation are catalyzed by the nitrogenase complex, which has 2 components: the iron protein and the molybdenum-iron protein. The chain is Nitrogenase iron protein from Tolumonas auensis (strain DSM 9187 / NBRC 110442 / TA 4).